The following is a 267-amino-acid chain: Nanos homolog 1 (267 aa).

The tract at residues 40–56 is essential for its translational repressor activity; sequence FSSWNDYLGLATLITRA. Residues 57–94 are disordered; the sequence is SDRGSPHEGPGPTAAGPTMGPPEDDEDDDGEEPEAGGR. A compositionally biased stretch (acidic residues) spans 78–90; that stretch reads PEDDEDDDGEEPE. The segment at 188–242 adopts a Nanos-type zinc-finger fold; it reads VCVFCRNNKEAVALYTTHILKGPDGRVLCPVLRRYTCPLCGASGDNAHTIKYCPL. Zn(2+) contacts are provided by Cys189, Cys192, His205, Cys216, Cys224, Cys227, His235, and Cys240. Short sequence motifs (C2HC) lie at residues 189–216 and 224–240; these read CVFC…RVLC and CPLC…IKYC. Positions 243–267 are disordered; it reads SKVPPPTVRPPPRSNRDSLPSKKLR. Positions 244 to 255 are enriched in pro residues; sequence KVPPPTVRPPPR. A compositionally biased stretch (basic and acidic residues) spans 256 to 267; that stretch reads SNRDSLPSKKLR.

Belongs to the nanos family. As to quaternary structure, interacts with PUM2, SNAPIN and CTNNB1. Interacts (via N-terminal region) with CTNND1. Interacts with DDX20 (via N-terminal region). Expressed in the oocyte. Transiently expressed in eight-cell embryos. At 12.5 dpc, it is re-expressed in the central nervous system and the expression continues in the adult brain, in which the hippocampal formation is the predominant region. Expressed in the seminiferous tubules of mature testis, but not in the primordial germ cells.

It is found in the cytoplasm. Its subcellular location is the perinuclear region. Its function is as follows. May act as a translational repressor which regulates translation of specific mRNAs by forming a complex with PUM2 that associates with the 3'-UTR of mRNA targets. Capable of interfering with the proadhesive and anti-invasive functions of E-cadherin. Up-regulates the production of MMP14 to promote tumor cell invasion. Not essential for normal development. The polypeptide is Nanos homolog 1 (Nanos1) (Mus musculus (Mouse)).